Here is a 474-residue protein sequence, read N- to C-terminus: Chromosomal replication initiator protein DnaA (474 aa).

Residues 1-90 are domain I, interacts with DnaA modulators; that stretch reads MSSSLWLQCL…RQVVVPSSQI (90 aa). Residues 91–137 form a domain II region; that stretch reads IAPAAPAVTLAPRPLPATRILQDDAPSRSWEPAPSPVQPESKSGYRS. A disordered region spans residues 112 to 137; the sequence is QDDAPSRSWEPAPSPVQPESKSGYRS. The segment covering 128 to 137 has biased composition (polar residues); that stretch reads QPESKSGYRS. The interval 138–354 is domain III, AAA+ region; the sequence is NVNPKHNFNN…GALNRVIANA (217 aa). 4 residues coordinate ATP: G182, G184, K185, and T186. Residues 355–474 are domain IV, binds dsDNA; the sequence is NFTGRAITID…YSNLIRTLST (120 aa).

It belongs to the DnaA family. As to quaternary structure, oligomerizes as a right-handed, spiral filament on DNA at oriC.

It localises to the cytoplasm. Functionally, plays an essential role in the initiation and regulation of chromosomal replication. ATP-DnaA binds to the origin of replication (oriC) to initiate formation of the DNA replication initiation complex once per cell cycle. Binds the DnaA box (a 9 base pair repeat at the origin) and separates the double-stranded (ds)DNA. Forms a right-handed helical filament on oriC DNA; dsDNA binds to the exterior of the filament while single-stranded (ss)DNA is stabiized in the filament's interior. The ATP-DnaA-oriC complex binds and stabilizes one strand of the AT-rich DNA unwinding element (DUE), permitting loading of DNA polymerase. After initiation quickly degrades to an ADP-DnaA complex that is not apt for DNA replication. Binds acidic phospholipids. This Photobacterium profundum (strain SS9) protein is Chromosomal replication initiator protein DnaA.